Here is a 154-residue protein sequence, read N- to C-terminus: Large ribosomal subunit protein uL13 (154 aa).

This sequence belongs to the universal ribosomal protein uL13 family. Part of the 50S ribosomal subunit.

Functionally, this protein is one of the early assembly proteins of the 50S ribosomal subunit, although it is not seen to bind rRNA by itself. It is important during the early stages of 50S assembly. This is Large ribosomal subunit protein uL13 from Bartonella tribocorum (strain CIP 105476 / IBS 506).